The following is a 302-amino-acid chain: Pyridoxal 5'-phosphate synthase subunit PdxS (302 aa).

D-ribose 5-phosphate is bound at residue aspartate 32. The active-site Schiff-base intermediate with D-ribose 5-phosphate is lysine 89. Glycine 161 is a binding site for D-ribose 5-phosphate. A D-glyceraldehyde 3-phosphate-binding site is contributed by arginine 173. D-ribose 5-phosphate-binding positions include glycine 222 and 243–244 (GS). Positions 275 to 302 (IAKNPGKGMKGQANADLDEEEQLQGRGV) are disordered.

This sequence belongs to the PdxS/SNZ family. In the presence of PdxT, forms a dodecamer of heterodimers.

The catalysed reaction is aldehydo-D-ribose 5-phosphate + D-glyceraldehyde 3-phosphate + L-glutamine = pyridoxal 5'-phosphate + L-glutamate + phosphate + 3 H2O + H(+). The protein operates within cofactor biosynthesis; pyridoxal 5'-phosphate biosynthesis. In terms of biological role, catalyzes the formation of pyridoxal 5'-phosphate from ribose 5-phosphate (RBP), glyceraldehyde 3-phosphate (G3P) and ammonia. The ammonia is provided by the PdxT subunit. Can also use ribulose 5-phosphate and dihydroxyacetone phosphate as substrates, resulting from enzyme-catalyzed isomerization of RBP and G3P, respectively. The sequence is that of Pyridoxal 5'-phosphate synthase subunit PdxS from Haloarcula marismortui (strain ATCC 43049 / DSM 3752 / JCM 8966 / VKM B-1809) (Halobacterium marismortui).